Reading from the N-terminus, the 210-residue chain is Probable nicotinate-nucleotide adenylyltransferase (210 aa).

This sequence belongs to the NadD family.

The catalysed reaction is nicotinate beta-D-ribonucleotide + ATP + H(+) = deamido-NAD(+) + diphosphate. The protein operates within cofactor biosynthesis; NAD(+) biosynthesis; deamido-NAD(+) from nicotinate D-ribonucleotide: step 1/1. In terms of biological role, catalyzes the reversible adenylation of nicotinate mononucleotide (NaMN) to nicotinic acid adenine dinucleotide (NaAD). The polypeptide is Probable nicotinate-nucleotide adenylyltransferase (Methylococcus capsulatus (strain ATCC 33009 / NCIMB 11132 / Bath)).